A 731-amino-acid polypeptide reads, in one-letter code: Catalase-peroxidase (731 aa).

Positions 98–226 (WHAAGTYRTA…LAAVQMGLIY (129 aa)) form a cross-link, tryptophyl-tyrosyl-methioninium (Trp-Tyr) (with M-252). Catalysis depends on His-99, which acts as the Proton acceptor. Residues 226–252 (YVNPEGPDGNPDIVASGHDVIETFGRM) constitute a cross-link (tryptophyl-tyrosyl-methioninium (Tyr-Met) (with W-98)). His-267 is a binding site for heme b.

The protein belongs to the peroxidase family. Peroxidase/catalase subfamily. In terms of assembly, homodimer or homotetramer. The cofactor is heme b. Formation of the three residue Trp-Tyr-Met cross-link is important for the catalase, but not the peroxidase activity of the enzyme.

It catalyses the reaction H2O2 + AH2 = A + 2 H2O. The catalysed reaction is 2 H2O2 = O2 + 2 H2O. Its function is as follows. Bifunctional enzyme with both catalase and broad-spectrum peroxidase activity. The chain is Catalase-peroxidase from Ruegeria pomeroyi (strain ATCC 700808 / DSM 15171 / DSS-3) (Silicibacter pomeroyi).